The chain runs to 147 residues: DNA polymerase epsilon subunit 3 (147 aa).

Position 2 is an N-acetylalanine (Ala-2). Residue Thr-83 is modified to Phosphothreonine. Positions 85-146 (LKEALEAYRR…EEQNEEEEVD (62 aa)) form a coiled coil. Over residues 93–124 (RREQKGKKEASEQKKKDKDKKTDSEEQDKSRD) the composition is skewed to basic and acidic residues. The disordered stretch occupies residues 93–147 (RREQKGKKEASEQKKKDKDKKTDSEEQDKSRDEDNDEDEERLEEEEQNEEEEVDN). Ser-122 is subject to Phosphoserine. A compositionally biased stretch (acidic residues) spans 125-147 (EDNDEDEERLEEEEQNEEEEVDN).

In terms of assembly, component of the DNA polymerase epsilon complex consisting of four subunits: the catalytic subunit POLE and the accessory subunits POLE2, POLE3 and POLE4. Interaction with POLE4 is a prerequisite for further binding with POLE and POLE2. Heterodimer with CHRAC1; binds to DNA. Component of the CHRAC ISWI chromatin remodeling complex at least composed of SMARCA5/SNF2H, BAZ1A/ACF1, CHRAC1 and POLE3; the complex preferentially binds DNA through the CHRAC1-POLE3 heterodimer and possesses ATP-dependent nucleosome-remodeling activity. Within the complex, the heterodimer with CHRAC1 interacts with SMARCA5/SNF2H; the interaction is direct and enhances nucleosome sliding activity by the SMARCA5/SNF2H and BAZ1A/ACF1 interaction. Within the complex, the heterodimer with CHRAC1 interacts with BAZ1A/ACF1; the interactions are direct.

It is found in the nucleus. Functionally, accessory component of the DNA polymerase epsilon complex. Participates in DNA repair and in chromosomal DNA replication. Forms a complex with CHRAC1 and binds naked DNA, which is then incorporated into chromatin, aided by the nucleosome-remodeling activity of ISWI/SNF2H and ACF1. Does not enhance nucleosome sliding activity of the ACF-5 ISWI chromatin remodeling complex. The protein is DNA polymerase epsilon subunit 3 (POLE3) of Bos taurus (Bovine).